The chain runs to 98 residues: NADH-ubiquinone oxidoreductase chain 4L (98 aa).

Transmembrane regions (helical) follow at residues 1 to 21 (MSLT…GLLL), 29 to 49 (SLLC…MVIL), and 61 to 81 (IILL…LVMV).

It belongs to the complex I subunit 4L family. Core subunit of respiratory chain NADH dehydrogenase (Complex I) which is composed of 45 different subunits.

It localises to the mitochondrion inner membrane. It catalyses the reaction a ubiquinone + NADH + 5 H(+)(in) = a ubiquinol + NAD(+) + 4 H(+)(out). In terms of biological role, core subunit of the mitochondrial membrane respiratory chain NADH dehydrogenase (Complex I) which catalyzes electron transfer from NADH through the respiratory chain, using ubiquinone as an electron acceptor. Part of the enzyme membrane arm which is embedded in the lipid bilayer and involved in proton translocation. The chain is NADH-ubiquinone oxidoreductase chain 4L (MT-ND4L) from Platyrrhinus helleri (Heller's broad-nosed bat).